Reading from the N-terminus, the 377-residue chain is Probable protein phosphatase 2C 7 (377 aa).

2 disordered regions span residues 1 to 68 (MAAH…GKAA) and 80 to 99 (TTVA…EDDE). The span at 21–39 (PPAAEAEAAAAAAAIARAA) shows a compositional bias: low complexity. The segment covering 51–63 (GVRHPLKHRRFRA) has biased composition (basic residues). Low complexity predominate over residues 80–89 (TTVAEATATG). The PPM-type phosphatase domain occupies 115–361 (SCGYSSFRGR…DNITCIVVKF (247 aa)). Positions 151, 152, 313, and 352 each coordinate Mn(2+).

The protein belongs to the PP2C family. Mg(2+) is required as a cofactor. Requires Mn(2+) as cofactor.

It catalyses the reaction O-phospho-L-seryl-[protein] + H2O = L-seryl-[protein] + phosphate. The enzyme catalyses O-phospho-L-threonyl-[protein] + H2O = L-threonyl-[protein] + phosphate. This chain is Probable protein phosphatase 2C 7, found in Oryza sativa subsp. japonica (Rice).